The sequence spans 434 residues: Peptidase B (434 aa).

2 residues coordinate Mn(2+): Lys-198 and Asp-203. The active site involves Lys-210. Asp-221, Asp-280, and Glu-282 together coordinate Mn(2+). The active site involves Arg-284.

It belongs to the peptidase M17 family. In terms of assembly, homohexamer. Mn(2+) serves as cofactor.

It localises to the cytoplasm. The catalysed reaction is Release of an N-terminal amino acid, Xaa, from a peptide or arylamide. Xaa is preferably Glu or Asp but may be other amino acids, including Leu, Met, His, Cys and Gln.. Its function is as follows. Probably plays an important role in intracellular peptide degradation. This chain is Peptidase B, found in Pasteurella multocida (strain Pm70).